We begin with the raw amino-acid sequence, 583 residues long: Threonine--tRNA ligase (583 aa).

Positions 185-478 are catalytic; that stretch reads DHRKLGRELD…LVEHYGGAFP (294 aa). Zn(2+) contacts are provided by Cys-278, His-329, and His-455.

Belongs to the class-II aminoacyl-tRNA synthetase family. Homodimer. It depends on Zn(2+) as a cofactor.

The protein localises to the cytoplasm. It carries out the reaction tRNA(Thr) + L-threonine + ATP = L-threonyl-tRNA(Thr) + AMP + diphosphate + H(+). In terms of biological role, catalyzes the attachment of threonine to tRNA(Thr) in a two-step reaction: L-threonine is first activated by ATP to form Thr-AMP and then transferred to the acceptor end of tRNA(Thr). Also edits incorrectly charged L-seryl-tRNA(Thr). This is Threonine--tRNA ligase from Borrelia turicatae (strain 91E135).